The following is a 194-amino-acid chain: Protein GrpE 1 (194 aa).

Residues 1-22 are disordered; the sequence is MIHNEEEQLEKKIEKNQDPKIN.

Belongs to the GrpE family. In terms of assembly, homodimer.

The protein resides in the cytoplasm. In terms of biological role, participates actively in the response to hyperosmotic and heat shock by preventing the aggregation of stress-denatured proteins, in association with DnaK and GrpE. It is the nucleotide exchange factor for DnaK and may function as a thermosensor. Unfolded proteins bind initially to DnaJ; upon interaction with the DnaJ-bound protein, DnaK hydrolyzes its bound ATP, resulting in the formation of a stable complex. GrpE releases ADP from DnaK; ATP binding to DnaK triggers the release of the substrate protein, thus completing the reaction cycle. Several rounds of ATP-dependent interactions between DnaJ, DnaK and GrpE are required for fully efficient folding. The sequence is that of Protein GrpE 1 from Buchnera aphidicola subsp. Acyrthosiphon pisum (strain APS) (Acyrthosiphon pisum symbiotic bacterium).